Reading from the N-terminus, the 181-residue chain is Protein csk22 (181 aa).

The next 5 membrane-spanning stretches (helical) occupy residues 5-22 (LQSV…YKKI), 35-57 (WLFT…SAIH), 61-78 (YGYL…VFFA), 91-113 (IYFR…RFLY), and 140-162 (LTIG…IIKL).

It localises to the cell membrane. This chain is Protein csk22 (csk22), found in Bacillus subtilis (strain 168).